The sequence spans 1134 residues: DNA damage-binding protein 1 (1134 aa).

It belongs to the DDB1 family. As to quaternary structure, interacts with cdt-1 and cul-4. Expressed at high levels in the spermatheca of adult hermaphrodites.

The protein resides in the cytoplasm. The protein localises to the nucleus. It participates in protein modification; protein ubiquitination. Its function is as follows. Plays a role in DNA repair. May be a component of an E3 ubiquitin-protein ligase which promotes histone ubiquitination in response to UV irradiation. Histone ubiquitination may be important for subsequent DNA repair. Promotes the degradation of the replication licensing factor cdt-1 during S-phase, thereby preventing rereplication of DNA during a single round of cell division. The sequence is that of DNA damage-binding protein 1 (ddb-1) from Caenorhabditis elegans.